We begin with the raw amino-acid sequence, 131 residues long: Probable histone H2A.3 (131 aa).

Residues 1–23 (MAGRGKQLGSGAAKKSTSRSSKA) form a disordered region. Low complexity predominate over residues 9-23 (GSGAAKKSTSRSSKA).

This sequence belongs to the histone H2A family. As to quaternary structure, the nucleosome is a histone octamer containing two molecules each of H2A, H2B, H3 and H4 assembled in one H3-H4 heterotetramer and two H2A-H2B heterodimers. The octamer wraps approximately 147 bp of DNA. Post-translationally, not ubiquitinated. As to expression, expressed in meristems and dividing cells.

It localises to the nucleus. The protein localises to the chromosome. Core component of nucleosome. Nucleosomes wrap and compact DNA into chromatin, limiting DNA accessibility to the cellular machineries which require DNA as a template. Histones thereby play a central role in transcription regulation, DNA repair, DNA replication and chromosomal stability. DNA accessibility is regulated via a complex set of post-translational modifications of histones, also called histone code, and nucleosome remodeling. The sequence is that of Probable histone H2A.3 from Arabidopsis thaliana (Mouse-ear cress).